The sequence spans 109 residues: Spermidine export protein MdtI (109 aa).

The Periplasmic portion of the chain corresponds to 1-5 (MAQFE). A helical membrane pass occupies residues 6-26 (WVHAAWLALAIVLEIVANVFL). The Cytoplasmic segment spans residues 27-35 (KFSDGFRRK). Residues 36-56 (IFGLLSLAAVLAAFSALSQAV) traverse the membrane as a helical segment. Topologically, residues 57–63 (KGIDLSV) are periplasmic. Residues 64–84 (VYALWGGFGIAATLAAGWILF) traverse the membrane as a helical segment. The Cytoplasmic segment spans residues 85–87 (GQR). The helical transmembrane segment at 88 to 108 (LNRKGWIGLVLLLAGMIMVKL) threads the bilayer. Ala-109 is a topological domain (periplasmic).

Belongs to the drug/metabolite transporter (DMT) superfamily. Small multidrug resistance (SMR) (TC 2.A.7.1) family. MdtI subfamily. In terms of assembly, forms a complex with MdtJ.

It localises to the cell inner membrane. Its function is as follows. Catalyzes the excretion of spermidine. The protein is Spermidine export protein MdtI (mdtI) of Shigella flexneri.